The sequence spans 320 residues: Cytochrome f (320 aa).

A signal peptide spans 1-35 (MQTRNTFSSIKEEITRSISVSLMIYIITWAPVSNA). Tyr36, Cys56, Cys59, and His60 together coordinate heme. Residues 286–306 (VQGLLFFFASVILAQIFLVLK) form a helical membrane-spanning segment.

The protein belongs to the cytochrome f family. As to quaternary structure, the 4 large subunits of the cytochrome b6-f complex are cytochrome b6, subunit IV (17 kDa polypeptide, petD), cytochrome f and the Rieske protein, while the 4 small subunits are PetG, PetL, PetM and PetN. The complex functions as a dimer. The cofactor is heme.

It localises to the plastid. The protein localises to the chloroplast thylakoid membrane. Its function is as follows. Component of the cytochrome b6-f complex, which mediates electron transfer between photosystem II (PSII) and photosystem I (PSI), cyclic electron flow around PSI, and state transitions. The polypeptide is Cytochrome f (Cucumis sativus (Cucumber)).